A 171-amino-acid chain; its full sequence is MEHKETGCQQPEGPILCINNCGFFGSAATMNMCSKCHKEMIMKQEQAKLAASSIDSIVNGGDSGKEPIIAGHAEVAVAQVEVKTLVAQPAEIAGPSEGVTVNPKGREGPNRCSTCRKRVGLTGFNCRCGNLYCAMHRYSDKHDCQFDYRTAARDAIAKANPVVKAEKLDKI.

The A20-type zinc finger occupies 11 to 45 (PEGPILCINNCGFFGSAATMNMCSKCHKEMIMKQE). Residues Cys-17, Cys-21, Cys-33, Cys-36, Cys-112, Cys-115, Cys-126, Cys-128, Cys-133, His-136, His-142, and Cys-144 each coordinate Zn(2+). The segment at 106 to 152 (REGPNRCSTCRKRVGLTGFNCRCGNLYCAMHRYSDKHDCQFDYRTAA) adopts an AN1-type zinc-finger fold.

May be involved in environmental stress response. The sequence is that of Zinc finger A20 and AN1 domain-containing stress-associated protein 8 (SAP8) from Oryza sativa subsp. indica (Rice).